A 129-amino-acid polypeptide reads, in one-letter code: Follitropin subunit beta (129 aa).

Residues 1–20 (MKSVQLCFLFCCWRAICCKS) form the signal peptide. Cystine bridges form between cysteine 21-cysteine 69, cysteine 35-cysteine 84, cysteine 38-cysteine 122, cysteine 46-cysteine 100, cysteine 50-cysteine 102, and cysteine 105-cysteine 112. Residues asparagine 25 and asparagine 42 are each glycosylated (N-linked (GlcNAc...) asparagine).

This sequence belongs to the glycoprotein hormones subunit beta family. Heterodimer. The active follitropin is a heterodimer composed of an alpha chain/CGA shared with other hormones and a unique beta chain/FSHB shown here.

It localises to the secreted. In terms of biological role, together with the alpha chain CGA constitutes follitropin, the follicle-stimulating hormone, and provides its biological specificity to the hormone heterodimer. Binds FSHR, a G protein-coupled receptor, on target cells to activate downstream signaling pathways. Follitropin is involved in follicle development and spermatogenesis in reproductive organs. The sequence is that of Follitropin subunit beta (FSHB) from Ailuropoda melanoleuca (Giant panda).